Here is a 122-residue protein sequence, read N- to C-terminus: Small ribosomal subunit protein uS13 (122 aa).

Residues 99–122 are disordered; that stretch reads RGQRTHTNARTRKGPAKAIAGKKK.

Belongs to the universal ribosomal protein uS13 family. Part of the 30S ribosomal subunit. Forms a loose heterodimer with protein S19. Forms two bridges to the 50S subunit in the 70S ribosome.

Its function is as follows. Located at the top of the head of the 30S subunit, it contacts several helices of the 16S rRNA. In the 70S ribosome it contacts the 23S rRNA (bridge B1a) and protein L5 of the 50S subunit (bridge B1b), connecting the 2 subunits; these bridges are implicated in subunit movement. Contacts the tRNAs in the A and P-sites. This Sinorhizobium fredii (strain NBRC 101917 / NGR234) protein is Small ribosomal subunit protein uS13.